A 231-amino-acid chain; its full sequence is Large ribosomal subunit protein uL1 (231 aa).

The protein belongs to the universal ribosomal protein uL1 family. Part of the 50S ribosomal subunit.

Its function is as follows. Binds directly to 23S rRNA. The L1 stalk is quite mobile in the ribosome, and is involved in E site tRNA release. In terms of biological role, protein L1 is also a translational repressor protein, it controls the translation of the L11 operon by binding to its mRNA. The protein is Large ribosomal subunit protein uL1 of Shouchella clausii (strain KSM-K16) (Alkalihalobacillus clausii).